The sequence spans 688 residues: MRLHLHRFISTSTPLRSGQNLTEKIVQKYAVNLPPNKLVHTGDYVTIKPAHCMSHDNSWPVATKFMGLGAKRVKDNRQIVCTLDHDVQNKTEKNLAKYANIERFAKEQGIDFYPAGRGIGHQIMIEEGYAFPLNLTVASDSHSNTYGGVGSLGTPIVRTDAASIWATVQTWWQIPPVAKVELKGNLQNGVTGKDIIVALCGVFNNDEVLNHAIEFVGDGVENLPIDYRLTIANMTTEWGALSGLFPIDDKLIEFYEGRLQKLGPNHPRINKDTIEALRRGSLASDEDAKYAKHLVIDLNTLSPYVSGPNSVKVSNPLSKLSQDNIAINKAYLVSCTNSRLSDIQAAADVLKGHKVHPNVEFYVAAASSLVQQDAEAAGAWQTIIDAGAKPLPAGCGPCIGLGTGLLKDGEVGISATNRNFKGRMGSKDALAYLASPEVVAASAVLGKIGAPEEIDGKPVNASPEIVKSIDLPKSSGNTGATSEEPISEDDTSEASVEVLPGFPKSIQGELILCNADNINTDGIYPGKYTYQDDISREQMAEVCMENYDPEFKTKTKSDDIIISGYNFGTGSSREQAATCILARGMKLVVAGSFGNIFSRNSINNALLTLEIPELIEKLRVKYDGVNELTIRTGWFLKWDVTKALVTVADLDGEVILQQKVGELGTNLQDIIVKGGLEGWVKSELQKEQ.

The [4Fe-4S] cluster site is built by C335, C395, and C398. The disordered stretch occupies residues 468-494 (SIDLPKSSGNTGATSEEPISEDDTSEA).

The protein belongs to the aconitase/IPM isomerase family. It depends on [4Fe-4S] cluster as a cofactor.

The protein localises to the mitochondrion. The enzyme catalyses (2R,3S)-homoisocitrate = cis-homoaconitate + H2O. It functions in the pathway amino-acid biosynthesis; L-lysine biosynthesis via AAA pathway; L-alpha-aminoadipate from 2-oxoglutarate: step 3/5. Catalyzes the reversible hydration of cis-homoaconitate to (2R,3S)-homoisocitrate, a step in the alpha-aminoadipate pathway for lysine biosynthesis. This chain is Homoaconitase, mitochondrial (LYS4), found in Candida parapsilosis (Yeast).